A 141-amino-acid chain; its full sequence is Large ribosomal subunit protein uL11 (141 aa).

Belongs to the universal ribosomal protein uL11 family. As to quaternary structure, part of the ribosomal stalk of the 50S ribosomal subunit. Interacts with L10 and the large rRNA to form the base of the stalk. L10 forms an elongated spine to which 2 L12 dimers bind in a sequential fashion forming a pentameric L10(L12)2(L12)2 complex. In stalled/isolated 50S subunits interacts with RqcH. Post-translationally, one or more lysine residues are methylated.

In terms of biological role, forms part of the ribosomal stalk which helps the ribosome interact with GTP-bound translation factors. Required to recruit RqcH, which is part of the ribosome quality control system (RQC), to stalled 50S ribosomal subunits. The sequence is that of Large ribosomal subunit protein uL11 from Bacillus subtilis (strain 168).